A 213-amino-acid chain; its full sequence is Putative 3-methyladenine DNA glycosylase (213 aa).

Residues 165–187 (GTPVPPDQVRNGPRTGVSGDGGV) are disordered.

It belongs to the DNA glycosylase MPG family.

The sequence is that of Putative 3-methyladenine DNA glycosylase from Streptomyces avermitilis (strain ATCC 31267 / DSM 46492 / JCM 5070 / NBRC 14893 / NCIMB 12804 / NRRL 8165 / MA-4680).